We begin with the raw amino-acid sequence, 523 residues long: Ribosomal protein uS12 methylthiotransferase RimO (523 aa).

Residues 7-134 (RRVALITLGC…IATHLAAVLA (128 aa)) form the MTTase N-terminal domain. 6 residues coordinate [4Fe-4S] cluster: Cys-16, Cys-52, Cys-97, Cys-192, Cys-196, and Cys-199. In terms of domain architecture, Radical SAM core spans 178-409 (LTAGPVAVLK…DLVEQLTAAR (232 aa)). A TRAM domain is found at 411–492 (DARIGSRVQV…GVDLIAEFIA (82 aa)).

Belongs to the methylthiotransferase family. RimO subfamily. [4Fe-4S] cluster is required as a cofactor.

It is found in the cytoplasm. The catalysed reaction is L-aspartate(89)-[ribosomal protein uS12]-hydrogen + (sulfur carrier)-SH + AH2 + 2 S-adenosyl-L-methionine = 3-methylsulfanyl-L-aspartate(89)-[ribosomal protein uS12]-hydrogen + (sulfur carrier)-H + 5'-deoxyadenosine + L-methionine + A + S-adenosyl-L-homocysteine + 2 H(+). In terms of biological role, catalyzes the methylthiolation of an aspartic acid residue of ribosomal protein uS12. The protein is Ribosomal protein uS12 methylthiotransferase RimO of Frankia casuarinae (strain DSM 45818 / CECT 9043 / HFP020203 / CcI3).